We begin with the raw amino-acid sequence, 421 residues long: MDKLRITGGARLHGEVVISGAKNSALPILCASLLTADPVRLSNVPQLNDTRTMLRLLGQMGVKAESAQTSVNLQADQVHSLEAPYELVKTMRASILVLGPLLARFGEARVSLPGGCTIGQRPVDQHIKGLEALGAQITMEHGFVVARAKRLKGASVRTDMVTVTGTENLLMAATLAEGQTILENAAREPEVIDLAELLIKMGARIQGHGTDRIVIDGVERLHGADHTVISDRIEAGTFLCAVGATGGDITLRNTDAAIMGATLDKLTEAGLHIESGPGWIRGVMNGRPKPVGIRTHEYPGFATDMQAQLMALNTIADGTAIVVENIFENRFMHVQELCRLGADIDIDGHTAVVRGVARLSGATVMATDLRASASLVIAGLAAEGDTLIDRIYHLDRGYDRMEIKLRNLGARIERVTGKEDE.

22 to 23 (KN) is a binding site for phosphoenolpyruvate. Arg92 contributes to the UDP-N-acetyl-alpha-D-glucosamine binding site. Residue Cys116 is the Proton donor of the active site. 2-(S-cysteinyl)pyruvic acid O-phosphothioketal is present on Cys116. Residues 121–125 (RPVDQ), Asp304, and Ile326 contribute to the UDP-N-acetyl-alpha-D-glucosamine site.

Belongs to the EPSP synthase family. MurA subfamily.

It localises to the cytoplasm. It carries out the reaction phosphoenolpyruvate + UDP-N-acetyl-alpha-D-glucosamine = UDP-N-acetyl-3-O-(1-carboxyvinyl)-alpha-D-glucosamine + phosphate. It participates in cell wall biogenesis; peptidoglycan biosynthesis. Cell wall formation. Adds enolpyruvyl to UDP-N-acetylglucosamine. This Bordetella avium (strain 197N) protein is UDP-N-acetylglucosamine 1-carboxyvinyltransferase.